Here is a 90-residue protein sequence, read N- to C-terminus: DNA-directed RNA polymerase subunit omega (90 aa).

Residues Arg69 to Arg90 are disordered.

This sequence belongs to the RNA polymerase subunit omega family. In terms of assembly, the RNAP catalytic core consists of 2 alpha, 1 beta, 1 beta' and 1 omega subunit. When a sigma factor is associated with the core the holoenzyme is formed, which can initiate transcription.

The catalysed reaction is RNA(n) + a ribonucleoside 5'-triphosphate = RNA(n+1) + diphosphate. Functionally, promotes RNA polymerase assembly. Latches the N- and C-terminal regions of the beta' subunit thereby facilitating its interaction with the beta and alpha subunits. The protein is DNA-directed RNA polymerase subunit omega of Aliivibrio salmonicida (strain LFI1238) (Vibrio salmonicida (strain LFI1238)).